The sequence spans 580 residues: Cis-3-hydroxy-L-proline dehydratase (580 aa).

Ser66 serves as the catalytic Proton acceptor.

Belongs to the AcnX family. Monomer. It depends on Fe(3+) as a cofactor.

The catalysed reaction is cis-3-hydroxy-L-proline = 1-pyrroline-2-carboxylate + H2O. With respect to regulation, inhibited by Zn(2+), Cd(2+) and Hg(2+), but not by Co(2+), Ni(2+), Mn(2+), Sr(2+), Mg(2+), or Fe(3+). Inhibited by pyrrole-2-carboxylate and its derivative 2-thiophenecarboxylate, but not by trans-aconitate, fluorocitrate and oxalomalate, which are typical inhibitors of the aconitase enzymes. In terms of biological role, catalyzes the dehydration of cis-3-hydroxy-L-proline (c3LHyp) to Delta(1)-pyrroline-2-carboxylate (Pyr2C). Also has activity with (2S,3S,4R)-3,4-dihydroxyproline as substrate, albeit at about 300-fold lower rate. No activity with L-proline, trans-4-hydroxy-L-proline (t4LHyp), cis-4-hydroxy-L-proline (c4LHyp), trans-3-hydroxy-L-proline (t3LHyp), D-proline, cis-4-hydroxy-D-proline (c4DHyp), trans-4-hydroxy-D-proline (t4DHyp) or L-serine as substrates. No hydro-lyase activity with citrate or cis-acotinate. Does not catalyze 2-epimerization of c3LHyp to trans-3-hydroxy-D-proline (t3DHyp). Involved in a degradation pathway that converts c3LHyp to L-proline, which would allow P.aeruginosa to grow on c3LHyp as a sole carbon source. The sequence is that of Cis-3-hydroxy-L-proline dehydratase from Pseudomonas aeruginosa (strain ATCC 15692 / DSM 22644 / CIP 104116 / JCM 14847 / LMG 12228 / 1C / PRS 101 / PAO1).